A 926-amino-acid chain; its full sequence is Alpha-aminoadipic semialdehyde synthase, mitochondrial (926 aa).

Residues 1-27 (MLRVSRTKLGRLSPSLSRGLHHKAVMA) constitute a mitochondrion transit peptide. The interval 28-455 (LRREDVNAWE…DAVIASNGML (428 aa)) is lysine-ketoglutarate reductase. An N6-acetyllysine mark is found at Lys-48 and Lys-56. Lys-93 bears the N6-acetyllysine; alternate mark. Lys-93 carries the N6-succinyllysine; alternate modification. Residue Lys-128 is modified to N6-acetyllysine. An N6-acetyllysine; alternate modification is found at Lys-138. Lys-138 carries the post-translational modification N6-succinyllysine; alternate. N6-succinyllysine is present on Lys-274. Position 286 is an N6-acetyllysine; alternate (Lys-286). Position 286 is an N6-succinyllysine; alternate (Lys-286). Lys-333 is modified (N6-succinyllysine). Position 458 is an N6-acetyllysine; alternate (Lys-458). The residue at position 458 (Lys-458) is an N6-succinyllysine; alternate. Residues 477-926 (MGTKKKVLVL…MYTTQSTIKL (450 aa)) form a saccharopine dehydrogenase region. Residues Ser-488, Asp-512, and Gln-516 each coordinate NAD(+). N6-acetyllysine; alternate occurs at positions 523 and 535. N6-succinyllysine; alternate is present on residues Lys-523 and Lys-535. Residues Leu-554, Ala-576, and Ser-577 each contribute to the NAD(+) site. 577 to 578 (SY) is an L-saccharopine binding site. Lys-584 carries the N6-acetyllysine; alternate modification. N6-succinyllysine; alternate is present on Lys-584. Residues Leu-603, Asp-604, and Pro-605 each contribute to the NAD(+) site. Residue Asp-604 participates in L-saccharopine binding. Arg-703 lines the L-saccharopine pocket. At Lys-707 the chain carries N6-acetyllysine. Position 724-726 (724-726 (TLR)) interacts with L-saccharopine. At Lys-732 the chain carries N6-succinyllysine. Lys-739 is subject to N6-acetyllysine. Lys-761 is subject to N6-acetyllysine; alternate. Lys-761 bears the N6-succinyllysine; alternate mark. N6-acetyllysine is present on Lys-780.

The protein in the N-terminal section; belongs to the AlaDH/PNT family. This sequence in the C-terminal section; belongs to the saccharopine dehydrogenase family. As to quaternary structure, homotetramer.

It localises to the mitochondrion. It catalyses the reaction L-saccharopine + NADP(+) + H2O = L-lysine + 2-oxoglutarate + NADPH + H(+). The enzyme catalyses L-saccharopine + NAD(+) + H2O = (S)-2-amino-6-oxohexanoate + L-glutamate + NADH + H(+). It functions in the pathway amino-acid degradation; L-lysine degradation via saccharopine pathway; glutaryl-CoA from L-lysine: step 1/6. The protein operates within amino-acid degradation; L-lysine degradation via saccharopine pathway; glutaryl-CoA from L-lysine: step 2/6. Bifunctional enzyme that catalyzes the first two steps in lysine degradation. The protein is Alpha-aminoadipic semialdehyde synthase, mitochondrial of Bos taurus (Bovine).